The primary structure comprises 215 residues: Ribosomal RNA small subunit methyltransferase G (215 aa).

Residues Gly71, Leu76, and Arg135 each contribute to the S-adenosyl-L-methionine site.

The protein belongs to the methyltransferase superfamily. RNA methyltransferase RsmG family.

Its subcellular location is the cytoplasm. In terms of biological role, specifically methylates the N7 position of a guanine in 16S rRNA. This is Ribosomal RNA small subunit methyltransferase G from Salinibacter ruber (strain DSM 13855 / M31).